Consider the following 254-residue polypeptide: Ribonuclease HII (254 aa).

The RNase H type-2 domain occupies 70–254; sequence TCIAGIDEAG…SFAPVKSVIS (185 aa). A divalent metal cation is bound by residues D76, E77, and D168.

The protein belongs to the RNase HII family. It depends on Mn(2+) as a cofactor. Mg(2+) is required as a cofactor.

It localises to the cytoplasm. The enzyme catalyses Endonucleolytic cleavage to 5'-phosphomonoester.. Functionally, endonuclease that specifically degrades the RNA of RNA-DNA hybrids. This chain is Ribonuclease HII, found in Bacillus pumilus (strain SAFR-032).